We begin with the raw amino-acid sequence, 359 residues long: 4-galactosyl-N-acetylglucosaminide 3-alpha-L-fucosyltransferase 9 (359 aa).

The Cytoplasmic segment spans residues 1–11 (MTSTSKGILRP). The chain crosses the membrane as a helical; Signal-anchor for type II membrane protein span at residues 12-32 (FLIVCIILGCFMACLLIYIKP). Over 33–359 (TNSWIFSPME…VGNLEKWFWN (327 aa)) the chain is Lumenal. Asn62 carries an N-linked (GlcNAc...) asparagine glycan. Residues 63 to 168 (ETTILVWVWP…RRDSDIQVPY (106 aa)) are acceptor-binding. Residue Gln75 coordinates a beta-D-galactosyl-(1-&gt;4)-N-acetyl-beta-D-glucosaminyl derivative. 3 disulfides stabilise this stretch: Cys82/Cys335, Cys91/Cys338, and Cys190/Cys238. An N-linked (GlcNAc...) asparagine glycan is attached at Asn101. An a beta-D-galactosyl-(1-&gt;4)-N-acetyl-beta-D-glucosaminyl derivative-binding site is contributed by Glu137. The Nucleophile role is filled by Glu137. Residue Glu137 participates in GDP-beta-L-fucose binding. Asn153 carries an N-linked (GlcNAc...) asparagine glycan. GDP-beta-L-fucose is bound by residues Tyr168, Val192, Ser194, Asn195, Arg202, Val226, Tyr241, Asn246, Tyr252, Glu255, and Lys256. The segment at 169 to 326 (GFLTVSTNPF…NWRKDFTVNL (158 aa)) is donor-binding. The acceptor-binding stretch occupies residues 327–359 (PRFWESHACLACDHVKRHQEYKSVGNLEKWFWN).

This sequence belongs to the glycosyltransferase 10 family. As to quaternary structure, homodimer. N-glycosylated with complex-type N-glycans. The glycan alpha-D-Man-(1-&gt;3)-beta-D-Man-(1-&gt;4)-GlcNAc-(1-&gt;4)-GlcNAc is attached at Asn-153. Strongly expressed in forebrain and stomach, lower expression in spleen and peripheral blood leukocytes, and no expression in small intestine, colon, liver, lung, kidney, adrenal cortex or uterus. Highly expressed in granulocytes. Not expressed in monocytes.

It localises to the golgi apparatus. Its subcellular location is the trans-Golgi network membrane. The protein localises to the golgi apparatus membrane. It catalyses the reaction a beta-D-galactosyl-(1-&gt;4)-N-acetyl-beta-D-glucosaminyl derivative + GDP-beta-L-fucose = a beta-D-galactosyl-(1-&gt;4)-[alpha-L-fucosyl-(1-&gt;3)]-N-acetyl-beta-D-glucosaminyl derivative + GDP + H(+). It carries out the reaction an alpha-Neu5Ac-(2-&gt;3)-beta-D-Gal-(1-&gt;4)-beta-D-GlcNAc-(1-&gt;3)-beta-D-Gal-(1-&gt;4)-beta-D-GlcNAc derivative + GDP-beta-L-fucose = an alpha-Neu5Ac-(2-&gt;3)-beta-D-Gal-(1-&gt;4)-beta-D-GlcNAc-(1-&gt;3)-beta-D-Gal-(1-&gt;4)-[alpha-L-Fuc-(1-&gt;3)]-beta-D-GlcNAc derivative + GDP + H(+). The enzyme catalyses alpha-N-glycoloylneuraminosyl-(2-&gt;3)-beta-D-galactosyl-(1-&gt;4)-N-acetyl-beta-D-glucosaminyl-(1-&gt;3)-beta-D-galactosyl-(1-&gt;4)-N-acetyl-beta-D-glucosaminyl-(1-&gt;3)-beta-D-galactosyl-(1-&gt;4)-beta-D-glucosyl-(1&lt;-&gt;1')-ceramide + GDP-beta-L-fucose = alpha-N-glycoloylneuraminosyl-(2-&gt;3)-beta-D-galactosyl-(1-&gt;4)-N-acetyl-beta-D-glucosaminyl-(1-&gt;3)-beta-D-galactosyl-(1-&gt;4)-[alpha-L-fucosyl-(1-&gt;3)]-N-acetyl-beta-D-glucosaminyl-(1-&gt;3)-beta-D-galactosyl-(1-&gt;4)-beta-D-glucosyl-(1&lt;-&gt;1')-ceramide + GDP + H(+). The catalysed reaction is alpha-D-galactosyl-(1-&gt;3)-beta-D-galactosyl-(1-&gt;4)-N-acetyl-beta-D-glucosaminyl-(1-&gt;3)-beta-D-galactosyl-(1-&gt;4)-beta-D-glucosyl-(1&lt;-&gt;1')-ceramide + GDP-beta-L-fucose = a neolactoside IV(3)-alpha-Gal,III(3)-alpha-Fuc-nLc4Cer + GDP + H(+). It catalyses the reaction a neolactoside nLc4Cer + GDP-beta-L-fucose = a neolactoside III(3)-alpha-Fuc-nLc4Cer + GDP + H(+). It carries out the reaction an N-acetyl-alpha-neuraminyl-(2-&gt;3)-beta-D-galactosyl-(1-&gt;4)-N-acetyl-beta-D-glucosaminyl derivative + GDP-beta-L-fucose = an alpha-Neu5Ac-(2-&gt;3)-beta-D-Gal-(1-&gt;4)-[alpha-L-Fuc-(1-&gt;3)]-beta-D-GlcNAc derivative + GDP + H(+). The enzyme catalyses beta-D-Gal-(1-&gt;4)-beta-D-GlcNAc-(1-&gt;3)-beta-D-Gal-(1-&gt;4)-D-Glc + GDP-beta-L-fucose = beta-D-Gal-(1-&gt;4)-[alpha-L-Fuc-(1-&gt;3)]-beta-D-GlcNAc-(1-&gt;3)-beta-D-Gal-(1-&gt;4)-D-Glc + GDP + H(+). The catalysed reaction is an alpha-L-Fuc-(1-&gt;2)-beta-D-Gal-(1-&gt;4)-beta-D-GlcNAc derivative + GDP-beta-L-fucose = an alpha-L-Fuc-(1-&gt;2)-beta-D-Gal-(1-&gt;4)-[alpha-L-Fuc-(1-&gt;3)]-beta-D-GlcNAc derivative + GDP + H(+). It functions in the pathway protein modification; protein glycosylation. Its pathway is glycolipid biosynthesis. Its activity is regulated as follows. Activated by Mn2+. Functionally, catalyzes alpha(1-&gt;3) linkage of fucosyl moiety transferred from GDP-beta-L-fucose to N-acetyl glucosamine (GlcNAc) within type 2 lactosamine (LacNAc, beta-D-Gal-(1-&gt;4)-beta-D-GlcNAc-) glycan attached to glycolipids and N- or O-linked glycoproteins. Fucosylates distal type 2 LacNAc and its fucosylated (H-type 2 LacNAc) and sialylated (sialyl-type 2 LacNAc) derivatives to form Lewis x (Lex) (CD15) and Lewis y (Ley) antigenic epitopes involved in cell adhesion and differentiation. Generates Lex epitopes in the brain, presumably playing a role in the maintenance of neuronal stemness and neurite outgrowth in progenitor neural cells. Fucosylates the internal type 2 LacNAc unit of the polylactosamine chain to form VIM-2 antigen that serves as recognition epitope for SELE. Can also modify milk oligosaccharides, in particular type 2 tetrasaccharide LNnT. The chain is 4-galactosyl-N-acetylglucosaminide 3-alpha-L-fucosyltransferase 9 from Homo sapiens (Human).